Here is a 584-residue protein sequence, read N- to C-terminus: Optineurin (584 aa).

Positions 1–32 (MSHQPLSCLTEKGDSPCETPGNGPSNMVHPSL) are disordered. Residues 38–180 (EELLQQMKEL…VSELQLKLNS (143 aa)) adopt a coiled-coil conformation. Positions 58 to 219 (MKLNNQAMKG…TPTRTDPISL (162 aa)) are interaction with Rab8. The LIR signature appears at 186-191 (DSFVEI). Serine 187 carries the post-translational modification Phosphoserine. Coiled-coil stretches lie at residues 243–278 (CLRE…HSST) and 307–511 (IQVT…DIEE). Residues 267-295 (DFEKKANGHSSTEKQTARRADREKEDKGQ) are compositionally biased toward basic and acidic residues. The tract at residues 267-302 (DFEKKANGHSSTEKQTARRADREKEDKGQESVGSEV) is disordered. Serine 345 carries the phosphoserine modification. Residues 414–584 (TKQQAEKVDK…LQIHVMDCII (171 aa)) form an interaction with HD region. The interval 415-524 (KQQAEKVDKM…RQSLMEMQCR (110 aa)) is interaction with MYO6. The UBAN motif lies at 477 to 482 (DFHAER). Serine 530 is modified (phosphoserine). A CCHC NOA-type zinc finger spans residues 554 to 584 (PRSIPIHSCPKCGEVLPDIDTLQIHVMDCII). Positions 562, 565, 578, and 582 each coordinate Zn(2+).

In terms of assembly, self-associates. Interacts with HD, GTF3A, TRAF3, TBK1 and MYO6. Interacts (via UBAN) with ubiquitinated TFRC. Interacts with active GTP-bound Rab8 (RAB8A and/or RAB8B). Interacts with TBC1D17. Binds to linear ubiquitin chains. Interacts with LC3 family members MAP1LC3A, MAP1LC3B, GABARAP, GABARAPL1 and GABARAPL2; OPTN phosphorylation increases the association (at least with MAP1LC3B). Interacts with RAB12; the interaction may be indirect. Interacts with TBK1; this interaction leads to the Golgi localization of TBK1 and its subsequent activation. Interacts with palmitoyltransferase ZDHHC17/HIP14; the interaction does not lead to palmitoylation of OPTN. Interacts with CYLD. Interacts with TOM1; the interaction is indirect and is mediated by MYO6, which acts as a bridge between TOM1 and OPTN. Interacts with USP12; the interaction is independent of USP12 deubiquitinase activity and may be involved in regulation of autophagic flux. Post-translationally, phosphorylated by TBK1, leading to restrict bacterial proliferation in case of infection. In terms of tissue distribution, in eye, it is expressed in anterior segment, retina, and optic nerve blood vessels (at protein level). Highly expressed in adult liver, heart and testis.

The protein resides in the cytoplasm. It is found in the perinuclear region. Its subcellular location is the golgi apparatus. It localises to the trans-Golgi network. The protein localises to the cytoplasmic vesicle. The protein resides in the autophagosome. It is found in the recycling endosome. Functionally, plays an important role in the maintenance of the Golgi complex, in membrane trafficking, in exocytosis, through its interaction with myosin VI and Rab8. Links myosin VI to the Golgi complex and plays an important role in Golgi ribbon formation. Plays a role in the activation of innate immune response during viral infection. Mechanistically, recruits TBK1 at the Golgi apparatus, promoting its trans-phosphorylation after RLR or TLR3 stimulation. In turn, activated TBK1 phosphorylates its downstream partner IRF3 to produce IFN-beta. Plays a neuroprotective role in the eye and optic nerve. May act by regulating membrane trafficking and cellular morphogenesis via a complex that contains Rab8 and huntingtin (HD). Mediates the interaction of Rab8 with the probable GTPase-activating protein TBC1D17 during Rab8-mediated endocytic trafficking, such as that of transferrin receptor (TFRC/TfR); regulates Rab8 recruitment to tubules emanating from the endocytic recycling compartment. Autophagy receptor that interacts directly with both the cargo to become degraded and an autophagy modifier of the MAP1 LC3 family; targets ubiquitin-coated bacteria (xenophagy), such as cytoplasmic Salmonella enterica, and appears to function in the same pathway as SQSTM1 and CALCOCO2/NDP52. The chain is Optineurin (Optn) from Mus musculus (Mouse).